A 179-amino-acid chain; its full sequence is NAD(P)H-quinone oxidoreductase subunit I, chloroplastic (179 aa).

4Fe-4S ferredoxin-type domains lie at 55-84 (GRIHFEFDKCIACEVCVRVCPIDLPVVDWR) and 95-124 (LNYSIDFGVCIFCGNCVEYCPTNCLSMTEE). [4Fe-4S] cluster contacts are provided by Cys64, Cys67, Cys70, Cys74, Cys104, Cys107, Cys110, and Cys114.

It belongs to the complex I 23 kDa subunit family. In terms of assembly, NDH is composed of at least 16 different subunits, 5 of which are encoded in the nucleus. The cofactor is [4Fe-4S] cluster.

The protein localises to the plastid. It localises to the chloroplast thylakoid membrane. The enzyme catalyses a plastoquinone + NADH + (n+1) H(+)(in) = a plastoquinol + NAD(+) + n H(+)(out). The catalysed reaction is a plastoquinone + NADPH + (n+1) H(+)(in) = a plastoquinol + NADP(+) + n H(+)(out). Its function is as follows. NDH shuttles electrons from NAD(P)H:plastoquinone, via FMN and iron-sulfur (Fe-S) centers, to quinones in the photosynthetic chain and possibly in a chloroplast respiratory chain. The immediate electron acceptor for the enzyme in this species is believed to be plastoquinone. Couples the redox reaction to proton translocation, and thus conserves the redox energy in a proton gradient. This is NAD(P)H-quinone oxidoreductase subunit I, chloroplastic from Acorus calamus (Sweet flag).